An 83-amino-acid chain; its full sequence is Hainantoxin-III 11 (83 aa).

Residues 1-21 (MKASMFLALAGLVLLFVVGYA) form the signal peptide. The propeptide occupies 22–48 (SESEEKDFPRELLSKIFAVDDFKGEER). 3 disulfide bridges follow: Cys-50–Cys-65, Cys-57–Cys-70, and Cys-64–Cys-77. Leu-81 carries the post-translational modification Leucine amide.

Belongs to the neurotoxin 10 (Hwtx-1) family. 15 (Hntx-3) subfamily. As to quaternary structure, monomer. Expressed by the venom gland.

It is found in the secreted. Functionally, selective antagonist of neuronal tetrodotoxin (TTX)-sensitive voltage-gated sodium channels (IC(50)=1270 nM on Nav1.1/SCN1A, 270 nM on Nav1.2/SCN2A, 491 nM on Nav1.3/SCN3A and 232 nM on Nav1.7/SCN9A). This toxin suppress Nav1.7 current amplitude without significantly altering the activation, inactivation, and repriming kinetics. Short extreme depolarizations partially activate the toxin-bound channel, indicating voltage-dependent inhibition of this toxin. This toxin increases the deactivation of the Nav1.7 current after extreme depolarizations. The toxin-Nav1.7 complex is gradually dissociated upon prolonged strong depolarizations in a voltage-dependent manner, and the unbound toxin rebinds to Nav1.7 after a long repolarization. Moreover, analysis of chimeric channels showed that the DIIS3-S4 linker is critical for toxin binding to Nav1.7. These data are consistent with this toxin interacting with Nav1.7 site 4 and trapping the domain II voltage sensor in the closed state. In Cyriopagopus hainanus (Chinese bird spider), this protein is Hainantoxin-III 11.